The primary structure comprises 108 residues: Large ribosomal subunit protein bL21c (108 aa).

The protein belongs to the bacterial ribosomal protein bL21 family. Part of the 50S ribosomal subunit.

The protein localises to the plastid. It localises to the chloroplast. Functionally, this protein binds to 23S rRNA. The polypeptide is Large ribosomal subunit protein bL21c (Cyanidium caldarium (Red alga)).